Consider the following 265-residue polypeptide: Mlc titration factor A (265 aa).

Positions 111, 148, 152, and 211 each coordinate Zn(2+).

Belongs to the MtfA family. Monomer in solution. Interacts with Mlc. It depends on Zn(2+) as a cofactor.

Its subcellular location is the cytoplasm. Association between Mlc and MtfA may induce structural changes that activate the peptidase activity of MtfA while inactivating the DNA-binding ability of Mlc. The aminopeptidase activity is partially inhibited by metal chelators such as EDTA and phenantroline, but not by inhibitors for serine-, aspartyl-, or cysteine-proteases. Functionally, involved in the modulation of the activity of the glucose-phosphotransferase system (glucose-PTS). Interacts with the transcriptional repressor Mlc, preventing its interaction with DNA and leading to the modulation of expression of genes regulated by Mlc, including ptsG, which encodes the PTS system glucose-specific EIICB component. Its function is as follows. Shows zinc-dependent metallopeptidase activity. In vitro, can cleave several artificial substrates. The highest activity is observed for L-alanine fused to 4-nitroanilide (L-alanine-pNA). Shows lower activity towards proline-pNA and valine-pNA. The protein is Mlc titration factor A of Klebsiella pneumoniae subsp. pneumoniae (strain ATCC 700721 / MGH 78578).